The chain runs to 169 residues: Gametocyte-specific factor 1-like (169 aa).

CHHC U11-48K-type zinc fingers lie at residues Leu6–Asn33 and Met40–Ser67. Cys9, His15, His25, Cys29, Cys43, His49, His59, and Cys63 together coordinate Zn(2+). Disordered stretches follow at residues Ser67 to Pro103 and Ser131 to Ala169. Residues Ser131 to Glu158 show a composition bias toward basic and acidic residues.

The protein belongs to the UPF0224 (FAM112) family.

The chain is Gametocyte-specific factor 1-like (GTSF1L) from Bos taurus (Bovine).